Consider the following 167-residue polypeptide: SsrA-binding protein (167 aa).

The disordered stretch occupies residues 144-167 (HDKRAADKEKQSKKEVRSAMAKYQ). The span at 146-160 (KRAADKEKQSKKEVR) shows a compositional bias: basic and acidic residues.

The protein belongs to the SmpB family.

The protein resides in the cytoplasm. In terms of biological role, required for rescue of stalled ribosomes mediated by trans-translation. Binds to transfer-messenger RNA (tmRNA), required for stable association of tmRNA with ribosomes. tmRNA and SmpB together mimic tRNA shape, replacing the anticodon stem-loop with SmpB. tmRNA is encoded by the ssrA gene; the 2 termini fold to resemble tRNA(Ala) and it encodes a 'tag peptide', a short internal open reading frame. During trans-translation Ala-aminoacylated tmRNA acts like a tRNA, entering the A-site of stalled ribosomes, displacing the stalled mRNA. The ribosome then switches to translate the ORF on the tmRNA; the nascent peptide is terminated with the 'tag peptide' encoded by the tmRNA and targeted for degradation. The ribosome is freed to recommence translation, which seems to be the essential function of trans-translation. This Synechococcus sp. (strain CC9902) protein is SsrA-binding protein.